The primary structure comprises 1934 residues: Myosin-7 (1934 aa).

The region spanning 31–80 (DLKKDVFVPDDKEEFVKAKIVSREGGKVTAETENGKTVTVKEDQVMQQNP) is the Myosin N-terminal SH3-like domain. The Myosin motor domain maps to 84 to 777 (DKIEDMAMLT…LLGLLEEMRD (694 aa)). Lysine 128 bears the N6,N6,N6-trimethyllysine mark. An ATP-binding site is contributed by 177–184 (GESGAGKT). Threonine 377 is modified (phosphothreonine). 2 actin-binding regions span residues 654 to 676 (LNKL…IPNE) and 756 to 770 (KFGH…GLLG). An IQ domain is found at 780–809 (LSRIITRIQAQSRGLLSRMEFKKLLERRDS). Residues 839–1934 (LKSAETEKEM…DIGAKGLNEE (1096 aa)) adopt a coiled-coil conformation. A phosphoserine mark is found at serine 1136 and serine 1268. The residue at position 1281 (threonine 1281) is a Phosphothreonine. At tyrosine 1307 the chain carries Phosphotyrosine. Threonine 1308 is subject to Phosphothreonine. The residue at position 1509 (serine 1509) is a Phosphoserine. Threonine 1512 bears the Phosphothreonine mark. A disordered region spans residues 1914-1934 (SQVNKLRAKSRDIGAKGLNEE). Positions 1922-1934 (KSRDIGAKGLNEE) are enriched in basic and acidic residues.

Belongs to the TRAFAC class myosin-kinesin ATPase superfamily. Myosin family. In terms of assembly, muscle myosin is a hexameric protein that consists of 2 heavy chain subunits (MHC), 2 alkali light chain subunits (MLC) and 2 regulatory light chain subunits (MLC-2). Interacts with ECPAS. Interacts (via C-terminus) with LRRC39.

It localises to the cytoplasm. The protein localises to the myofibril. Its subcellular location is the sarcomere. Its function is as follows. Myosins are actin-based motor molecules with ATPase activity essential for muscle contraction. Forms regular bipolar thick filaments that, together with actin thin filaments, constitute the fundamental contractile unit of skeletal and cardiac muscle. In Mesocricetus auratus (Golden hamster), this protein is Myosin-7 (MYH7).